The sequence spans 215 residues: Cytochrome c biogenesis ATP-binding export protein CcmA (215 aa).

Residues 3 to 211 enclose the ABC transporter domain; the sequence is LTAENLAARR…KMTGFAGVDR (209 aa). 35-42 contributes to the ATP binding site; sequence GRNGSGKS.

It belongs to the ABC transporter superfamily. CcmA exporter (TC 3.A.1.107) family. In terms of assembly, the complex is composed of two ATP-binding proteins (CcmA) and two transmembrane proteins (CcmB).

The protein resides in the cell inner membrane. It catalyses the reaction heme b(in) + ATP + H2O = heme b(out) + ADP + phosphate + H(+). Its function is as follows. Part of the ABC transporter complex CcmAB involved in the biogenesis of c-type cytochromes; once thought to export heme, this seems not to be the case, but its exact role is uncertain. Responsible for energy coupling to the transport system. In Rhizobium etli (strain ATCC 51251 / DSM 11541 / JCM 21823 / NBRC 15573 / CFN 42), this protein is Cytochrome c biogenesis ATP-binding export protein CcmA.